The following is a 226-amino-acid chain: MNENLFASFATPTMMGLPIIMLIIMFPSILFPTPKRMITNRVVSVQQWLINMIMKQMMNIHNNKGRTWTLMLISLITFIGTTNLLGLLPHTFTPTTQLSMNLGMAIPLWAGAVVTGFRHKTKASLAHFLPQGTPIPLIPMLIIIQTISLFIQPMALAVRLTANITAGHLLIHLIGGATLALMSISPTTASITFIILILLTILEFAVALIQAYVFTLLVSLYLHDNT.

6 helical membrane passes run 12 to 32 (PTMM…ILFP), 68 to 88 (WTLM…LGLL), 97 to 117 (QLSM…VTGF), 138 to 158 (IPML…ALAV), 164 to 184 (ITAG…LMSI), and 189 to 209 (ASIT…VALI).

This sequence belongs to the ATPase A chain family. In terms of assembly, component of the ATP synthase complex composed at least of ATP5F1A/subunit alpha, ATP5F1B/subunit beta, ATP5MC1/subunit c (homooctomer), MT-ATP6/subunit a, MT-ATP8/subunit 8, ATP5ME/subunit e, ATP5MF/subunit f, ATP5MG/subunit g, ATP5MK/subunit k, ATP5MJ/subunit j, ATP5F1C/subunit gamma, ATP5F1D/subunit delta, ATP5F1E/subunit epsilon, ATP5PF/subunit F6, ATP5PB/subunit b, ATP5PD/subunit d, ATP5PO/subunit OSCP. ATP synthase complex consists of a soluble F(1) head domain (subunits alpha(3) and beta(3)) - the catalytic core - and a membrane F(0) domain - the membrane proton channel (subunits c, a, 8, e, f, g, k and j). These two domains are linked by a central stalk (subunits gamma, delta, and epsilon) rotating inside the F1 region and a stationary peripheral stalk (subunits F6, b, d, and OSCP). Interacts with DNAJC30; interaction is direct.

The protein resides in the mitochondrion inner membrane. It carries out the reaction H(+)(in) = H(+)(out). Functionally, subunit a, of the mitochondrial membrane ATP synthase complex (F(1)F(0) ATP synthase or Complex V) that produces ATP from ADP in the presence of a proton gradient across the membrane which is generated by electron transport complexes of the respiratory chain. ATP synthase complex consist of a soluble F(1) head domain - the catalytic core - and a membrane F(1) domain - the membrane proton channel. These two domains are linked by a central stalk rotating inside the F(1) region and a stationary peripheral stalk. During catalysis, ATP synthesis in the catalytic domain of F(1) is coupled via a rotary mechanism of the central stalk subunits to proton translocation. With the subunit c (ATP5MC1), forms the proton-conducting channel in the F(0) domain, that contains two crucial half-channels (inlet and outlet) that facilitate proton movement from the mitochondrial intermembrane space (IMS) into the matrix. Protons are taken up via the inlet half-channel and released through the outlet half-channel, following a Grotthuss mechanism. This is ATP synthase F(0) complex subunit a from Dasypus novemcinctus (Nine-banded armadillo).